A 323-amino-acid polypeptide reads, in one-letter code: Methionyl-tRNA formyltransferase (323 aa).

113–116 (SLLP) serves as a coordination point for (6S)-5,6,7,8-tetrahydrofolate.

This sequence belongs to the Fmt family.

It carries out the reaction L-methionyl-tRNA(fMet) + (6R)-10-formyltetrahydrofolate = N-formyl-L-methionyl-tRNA(fMet) + (6S)-5,6,7,8-tetrahydrofolate + H(+). Its function is as follows. Attaches a formyl group to the free amino group of methionyl-tRNA(fMet). The formyl group appears to play a dual role in the initiator identity of N-formylmethionyl-tRNA by promoting its recognition by IF2 and preventing the misappropriation of this tRNA by the elongation apparatus. In Porphyromonas gingivalis (strain ATCC 33277 / DSM 20709 / CIP 103683 / JCM 12257 / NCTC 11834 / 2561), this protein is Methionyl-tRNA formyltransferase.